A 68-amino-acid polypeptide reads, in one-letter code: DNA gyrase inhibitor YacG (68 aa).

Residues Cys14, Cys17, Cys29, and Cys33 each contribute to the Zn(2+) site.

Belongs to the DNA gyrase inhibitor YacG family. Interacts with GyrB. The cofactor is Zn(2+).

Its function is as follows. Inhibits all the catalytic activities of DNA gyrase by preventing its interaction with DNA. Acts by binding directly to the C-terminal domain of GyrB, which probably disrupts DNA binding by the gyrase. This chain is DNA gyrase inhibitor YacG, found in Azorhizobium caulinodans (strain ATCC 43989 / DSM 5975 / JCM 20966 / LMG 6465 / NBRC 14845 / NCIMB 13405 / ORS 571).